The following is a 275-amino-acid chain: Formamidopyrimidine-DNA glycosylase (275 aa).

The Schiff-base intermediate with DNA role is filled by Pro-2. The active-site Proton donor is the Glu-3. Residue Lys-59 is the Proton donor; for beta-elimination activity of the active site. Residues His-93, Arg-112, and Arg-153 each contribute to the DNA site. Residues 238-272 form an FPG-type zinc finger; sequence NVYDRVGKPCPRCQTAIERIVVAQRSTFFCPLCQV. The active-site Proton donor; for delta-elimination activity is the Arg-262.

This sequence belongs to the FPG family. In terms of assembly, monomer. Zn(2+) serves as cofactor.

The enzyme catalyses Hydrolysis of DNA containing ring-opened 7-methylguanine residues, releasing 2,6-diamino-4-hydroxy-5-(N-methyl)formamidopyrimidine.. The catalysed reaction is 2'-deoxyribonucleotide-(2'-deoxyribose 5'-phosphate)-2'-deoxyribonucleotide-DNA = a 3'-end 2'-deoxyribonucleotide-(2,3-dehydro-2,3-deoxyribose 5'-phosphate)-DNA + a 5'-end 5'-phospho-2'-deoxyribonucleoside-DNA + H(+). In terms of biological role, involved in base excision repair of DNA damaged by oxidation or by mutagenic agents. Acts as a DNA glycosylase that recognizes and removes damaged bases. Has a preference for oxidized purines, such as 7,8-dihydro-8-oxoguanine (8-oxoG). Has AP (apurinic/apyrimidinic) lyase activity and introduces nicks in the DNA strand. Cleaves the DNA backbone by beta-delta elimination to generate a single-strand break at the site of the removed base with both 3'- and 5'-phosphates. In Chloroflexus aggregans (strain MD-66 / DSM 9485), this protein is Formamidopyrimidine-DNA glycosylase.